The following is a 243-amino-acid chain: Triosephosphate isomerase (243 aa).

9 to 11 contacts substrate; sequence NWK. The active-site Electrophile is histidine 96. Catalysis depends on glutamate 165, which acts as the Proton acceptor. Substrate-binding positions include glycine 171, serine 204, and 225–226; that span reads GG.

Belongs to the triosephosphate isomerase family. As to quaternary structure, homodimer.

The protein localises to the cytoplasm. The catalysed reaction is D-glyceraldehyde 3-phosphate = dihydroxyacetone phosphate. It participates in carbohydrate biosynthesis; gluconeogenesis. The protein operates within carbohydrate degradation; glycolysis; D-glyceraldehyde 3-phosphate from glycerone phosphate: step 1/1. Involved in the gluconeogenesis. Catalyzes stereospecifically the conversion of dihydroxyacetone phosphate (DHAP) to D-glyceraldehyde-3-phosphate (G3P). This chain is Triosephosphate isomerase, found in Prochlorococcus marinus (strain SARG / CCMP1375 / SS120).